The following is a 141-amino-acid chain: Nucleoside diphosphate kinase (141 aa).

6 residues coordinate ATP: Lys11, Phe59, Arg87, Thr93, Arg104, and Asn114. His117 (pros-phosphohistidine intermediate) is an active-site residue.

It belongs to the NDK family. As to quaternary structure, homotetramer. Requires Mg(2+) as cofactor.

It is found in the cytoplasm. It carries out the reaction a 2'-deoxyribonucleoside 5'-diphosphate + ATP = a 2'-deoxyribonucleoside 5'-triphosphate + ADP. The enzyme catalyses a ribonucleoside 5'-diphosphate + ATP = a ribonucleoside 5'-triphosphate + ADP. In terms of biological role, major role in the synthesis of nucleoside triphosphates other than ATP. The ATP gamma phosphate is transferred to the NDP beta phosphate via a ping-pong mechanism, using a phosphorylated active-site intermediate. This Stenotrophomonas maltophilia (strain R551-3) protein is Nucleoside diphosphate kinase.